Here is a 94-residue protein sequence, read N- to C-terminus: Aspartyl/glutamyl-tRNA(Asn/Gln) amidotransferase subunit C (94 aa).

The protein belongs to the GatC family. As to quaternary structure, heterotrimer of A, B and C subunits.

The enzyme catalyses L-glutamyl-tRNA(Gln) + L-glutamine + ATP + H2O = L-glutaminyl-tRNA(Gln) + L-glutamate + ADP + phosphate + H(+). It catalyses the reaction L-aspartyl-tRNA(Asn) + L-glutamine + ATP + H2O = L-asparaginyl-tRNA(Asn) + L-glutamate + ADP + phosphate + 2 H(+). Allows the formation of correctly charged Asn-tRNA(Asn) or Gln-tRNA(Gln) through the transamidation of misacylated Asp-tRNA(Asn) or Glu-tRNA(Gln) in organisms which lack either or both of asparaginyl-tRNA or glutaminyl-tRNA synthetases. The reaction takes place in the presence of glutamine and ATP through an activated phospho-Asp-tRNA(Asn) or phospho-Glu-tRNA(Gln). This is Aspartyl/glutamyl-tRNA(Asn/Gln) amidotransferase subunit C from Desulfotalea psychrophila (strain LSv54 / DSM 12343).